The sequence spans 563 residues: Ataxin-10 homolog (563 aa).

Phosphothreonine is present on Thr433. The disordered stretch occupies residues 544 to 563 (VSKEEDPGNENSEIISIDED). At Ser559 the chain carries Phosphoserine.

It belongs to the ataxin-10 family.

It is found in the cytoplasm. Its function is as follows. May play a role in the regulation of cytokinesis. In Saccharomyces cerevisiae (strain ATCC 204508 / S288c) (Baker's yeast), this protein is Ataxin-10 homolog (CTR86).